The chain runs to 900 residues: Translation initiation factor IF-2 (900 aa).

Basic and acidic residues-rich tracts occupy residues 119-158 (AAKA…EKQE), 165-191 (ADEK…KADA), and 198-229 (EEAR…DHHV). Residues 119–306 (AAKAEAEAKA…NARSVAPESM (188 aa)) form a disordered region. Residues 257–272 (SANAGNNANSNSNAGS) show a composition bias toward low complexity. In terms of domain architecture, tr-type G spans 400 to 569 (PRAPVVTIMG…LLESEVLELK (170 aa)). Positions 409–416 (GHVDHGKT) are G1. 409–416 (GHVDHGKT) contacts GTP. Residues 434–438 (GITQH) are G2. Residues 455-458 (DTPG) are G3. GTP is bound by residues 455–459 (DTPGH) and 509–512 (NKID). The segment at 509-512 (NKID) is G4. The segment at 545–547 (SAK) is G5.

Belongs to the TRAFAC class translation factor GTPase superfamily. Classic translation factor GTPase family. IF-2 subfamily.

The protein localises to the cytoplasm. Its function is as follows. One of the essential components for the initiation of protein synthesis. Protects formylmethionyl-tRNA from spontaneous hydrolysis and promotes its binding to the 30S ribosomal subunits. Also involved in the hydrolysis of GTP during the formation of the 70S ribosomal complex. The protein is Translation initiation factor IF-2 of Shewanella piezotolerans (strain WP3 / JCM 13877).